A 647-amino-acid chain; its full sequence is ATP-dependent zinc metalloprotease FtsH (647 aa).

The segment at 1–33 (MARKSDEDTNPMDKFMDRLRGSPGDGGPGRPDP) is disordered. Over 1-39 (MARKSDEDTNPMDKFMDRLRGSPGDGGPGRPDPSQRKVH) the chain is Cytoplasmic. A helical membrane pass occupies residues 40–60 (FSIWYFILALLLIVWMQTYMG). Topologically, residues 61–134 (EQQSEKISYS…RFSGDVQNPW (74 aa)) are periplasmic. A helical transmembrane segment spans residues 135–155 (LGLITWWLLPFAIMIFFWSFL). Over 156–647 (MRRMGGGPQG…DPVQVEGGAA (492 aa)) the chain is Cytoplasmic. Residue 227–234 (GAPGTGKT) participates in ATP binding. His-449 provides a ligand contact to Zn(2+). Glu-450 is an active-site residue. 2 residues coordinate Zn(2+): His-453 and Asp-526.

The protein in the central section; belongs to the AAA ATPase family. In the C-terminal section; belongs to the peptidase M41 family. As to quaternary structure, homohexamer. Zn(2+) serves as cofactor.

It localises to the cell inner membrane. Its function is as follows. Acts as a processive, ATP-dependent zinc metallopeptidase for both cytoplasmic and membrane proteins. Plays a role in the quality control of integral membrane proteins. This chain is ATP-dependent zinc metalloprotease FtsH, found in Syntrophobacter fumaroxidans (strain DSM 10017 / MPOB).